The primary structure comprises 315 residues: uncharacterized protein (315 aa).

The protein belongs to the carbohydrate kinase PfkB family.

This is an uncharacterized protein from Escherichia coli (strain K12).